The chain runs to 354 residues: MAKQAIKRAKILAVKNNNKIGVLLINLGTPDEPSVPAVRRYLRQFLSDPKVIDVPSLVRWIIVHLCILPFRPKRSAKLYQKIWMPEGSPLLVYSEMLRERVGETLGDDFCVALGMRYGKPSIETALKKLQEAQCRQLIVLPLFPQYSTSTTASALEEVRAKNSFKEMTVIDRFFEEPHYIDSMTTLIHENLNEFQPDYFLFSYHGLPERHLVKSGCQLAICNRKNNCSPISSSNENCYRAQCFETSRLIAKKLNLTDQQYGVAFQSRLGRAKWIEPYTDKYLIELSKKGIKKLMVVCPSFPVDCLETLEEIGIRAQSQWQRLGGETLKLIPSLNAHPQWVNAIAKMAKKSLQLF.

Fe cation contacts are provided by His204 and Glu306.

This sequence belongs to the ferrochelatase family.

It localises to the cytoplasm. It carries out the reaction heme b + 2 H(+) = protoporphyrin IX + Fe(2+). It participates in porphyrin-containing compound metabolism; protoheme biosynthesis; protoheme from protoporphyrin-IX: step 1/1. Its function is as follows. Catalyzes the ferrous insertion into protoporphyrin IX. This Coxiella burnetii (strain CbuK_Q154) (Coxiella burnetii (strain Q154)) protein is Ferrochelatase.